The following is an 80-amino-acid chain: Exodeoxyribonuclease 7 small subunit (80 aa).

The tract at residues 60 to 80 (LIDSDGTEHNLDPNNASAPEE) is disordered. The span at 61–70 (IDSDGTEHNL) shows a compositional bias: basic and acidic residues. The span at 71–80 (DPNNASAPEE) shows a compositional bias: polar residues.

It belongs to the XseB family. Heterooligomer composed of large and small subunits.

It is found in the cytoplasm. It carries out the reaction Exonucleolytic cleavage in either 5'- to 3'- or 3'- to 5'-direction to yield nucleoside 5'-phosphates.. In terms of biological role, bidirectionally degrades single-stranded DNA into large acid-insoluble oligonucleotides, which are then degraded further into small acid-soluble oligonucleotides. In Lactobacillus acidophilus (strain ATCC 700396 / NCK56 / N2 / NCFM), this protein is Exodeoxyribonuclease 7 small subunit.